The sequence spans 260 residues: 4-hydroxy-tetrahydrodipicolinate reductase (260 aa).

NAD(+)-binding positions include 12 to 17, 92 to 94, and 118 to 121; these read GFRGKM, GTT, and APNF. The active-site Proton donor/acceptor is the His-148. Position 149 (His-149) interacts with (S)-2,3,4,5-tetrahydrodipicolinate. Lys-152 functions as the Proton donor in the catalytic mechanism. 158–159 lines the (S)-2,3,4,5-tetrahydrodipicolinate pocket; it reads GT.

The protein belongs to the DapB family.

Its subcellular location is the cytoplasm. It carries out the reaction (S)-2,3,4,5-tetrahydrodipicolinate + NAD(+) + H2O = (2S,4S)-4-hydroxy-2,3,4,5-tetrahydrodipicolinate + NADH + H(+). It catalyses the reaction (S)-2,3,4,5-tetrahydrodipicolinate + NADP(+) + H2O = (2S,4S)-4-hydroxy-2,3,4,5-tetrahydrodipicolinate + NADPH + H(+). Its pathway is amino-acid biosynthesis; L-lysine biosynthesis via DAP pathway; (S)-tetrahydrodipicolinate from L-aspartate: step 4/4. Catalyzes the conversion of 4-hydroxy-tetrahydrodipicolinate (HTPA) to tetrahydrodipicolinate. This is 4-hydroxy-tetrahydrodipicolinate reductase from Lactococcus lactis subsp. cremoris (strain MG1363).